Consider the following 158-residue polypeptide: Rhombotin-2 (158 aa).

2 consecutive LIM zinc-binding domains span residues 30 to 89 (CGGC…RLFG) and 94 to 153 (CASC…EWTK).

Interacts via its LIM domains with ELF2 and LDB1. Also interacts with basic helix-loop-helix protein TAL1/SCL and can assemble in a complex with LMO2 and TAL1/SCL. Interacts with BEX2 and KDM5A.

Its subcellular location is the nucleus. Functionally, acts with TAL1/SCL to regulate red blood cell development. Also acts with LDB1 to maintain erythroid precursors in an immature state. This chain is Rhombotin-2 (LMO2), found in Homo sapiens (Human).